The sequence spans 382 residues: Mannitol-1-phosphate 5-dehydrogenase (382 aa).

Position 3–14 (3–14 (ALHFGAGNIGRG)) interacts with NAD(+).

The protein belongs to the mannitol dehydrogenase family.

The catalysed reaction is D-mannitol 1-phosphate + NAD(+) = beta-D-fructose 6-phosphate + NADH + H(+). This is Mannitol-1-phosphate 5-dehydrogenase from Salmonella dublin (strain CT_02021853).